Here is a 216-residue protein sequence, read N- to C-terminus: Uracil phosphoribosyltransferase (216 aa).

Residues R85, R110, and 135–143 (DPMVATGYS) each bind 5-phospho-alpha-D-ribose 1-diphosphate. Uracil is bound by residues I200 and 205–207 (GDA). D206 is a 5-phospho-alpha-D-ribose 1-diphosphate binding site.

The protein belongs to the UPRTase family. Requires Mg(2+) as cofactor.

It catalyses the reaction UMP + diphosphate = 5-phospho-alpha-D-ribose 1-diphosphate + uracil. It functions in the pathway pyrimidine metabolism; UMP biosynthesis via salvage pathway; UMP from uracil: step 1/1. Its activity is regulated as follows. Allosterically activated by GTP. Functionally, catalyzes the conversion of uracil and 5-phospho-alpha-D-ribose 1-diphosphate (PRPP) to UMP and diphosphate. This is Uracil phosphoribosyltransferase from Paraburkholderia xenovorans (strain LB400).